Reading from the N-terminus, the 750-residue chain is uncharacterized protein (750 aa).

The next 3 helical transmembrane spans lie at methionine 1 to threonine 21, tyrosine 465 to leucine 485, and glycine 586 to serine 606.

Its subcellular location is the membrane. This is an uncharacterized protein from Saccharomyces cerevisiae (strain ATCC 204508 / S288c) (Baker's yeast).